A 320-amino-acid polypeptide reads, in one-letter code: Prophage side tail fiber protein homolog StfQ (320 aa).

Disordered regions lie at residues 147 to 213 and 241 to 270; these read SGRA…HKSS and TTSG…TAAS. Composition is skewed to polar residues over residues 172 to 206 and 241 to 258; these read DLGT…NSAG and TTSG…SSDG. The segment covering 261–270 has biased composition (low complexity); the sequence is THSLSGTAAS.

It belongs to the tail fiber family.

This Escherichia coli (strain K12) protein is Prophage side tail fiber protein homolog StfQ (stfQ).